Here is a 1146-residue protein sequence, read N- to C-terminus: Cell division cycle and apoptosis regulator protein 1 (1146 aa).

Residues 1–246 (MAQFGGQKNP…AQPQPQSLLQ (246 aa)) form an interaction with AR region. The tract at residues 200–657 (QRIQTLPNQN…RALSSKGLKS (458 aa)) is interaction with GATA2. Residues 282-351 (IVSQPQPARR…RRERERSPRR (70 aa)) form a disordered region. 2 stretches are compositionally biased toward basic and acidic residues: residues 290 to 331 (RRLD…ERSP) and 338 to 349 (ERSPRRERERSP). Residue Ser453 is modified to Phosphoserine. Residues 591–615 (KQQLVEKLQGERKKADGEQDEEEKD) are a coiled coil. Residues 599–635 (QGERKKADGEQDEEEKDDGEVKEIATPTHWSKLDPKA) form a disordered region. Positions 608-618 (EQDEEEKDDGE) are enriched in acidic residues. The residue at position 624 (Thr624) is a Phosphothreonine. The SAP domain occupies 633–667 (PKAMKVNDLRKELESRALSSKGLKSQLIARLTKQL). Lys634 is covalently cross-linked (Glycyl lysine isopeptide (Lys-Gly) (interchain with G-Cter in ubiquitin)). Residues 640–1146 (DLRKELESRA…EKSKENGSGV (507 aa)) form an interaction with GATA1 region. Thr664 is subject to Phosphothreonine. Basic and acidic residues-rich tracts occupy residues 671–684 (EQKEEQKELEKSEK), 691–716 (DKKSEDDKEEEERKRQEEVERQRQER), 793–814 (KEDKKDKEKKSKKEERKDKKEE), and 829–852 (SGDDKDKKEDRDERKKEEKRKDDS). 2 disordered regions span residues 671–716 (EQKE…RQER) and 793–912 (KEDK…KEKP). Phosphoserine occurs at positions 682 and 694. Residues 853–884 (KDDDETEEDNNQDEYDPMEAEEAEDEDDDREE) are compositionally biased toward acidic residues. Residue Thr858 is modified to Phosphothreonine. Residues 885–912 (EEVKRDDKRDVSRYCKDRPAKDKEKEKP) show a composition bias toward basic and acidic residues. Residue Lys1008 forms a Glycyl lysine isopeptide (Lys-Gly) (interchain with G-Cter in SUMO1); alternate linkage. Residue Lys1008 forms a Glycyl lysine isopeptide (Lys-Gly) (interchain with G-Cter in SUMO2); alternate linkage. The stretch at 1029–1110 (DVGSLLQKLE…LQFENQLNKT (82 aa)) forms a coiled coil. Glycyl lysine isopeptide (Lys-Gly) (interchain with G-Cter in SUMO2) cross-links involve residues Lys1063 and Lys1131.

In terms of assembly, directly interacts with ESR1, NR3C1 and p53/TP53. Interacts (via N-terminus) with CALCOCO1. Interacts with MED1 and GATA1. Interacts with AR and GATA2.

Its subcellular location is the cytoplasm. The protein resides in the perinuclear region. Functionally, associates with components of the Mediator and p160 coactivator complexes that play a role as intermediaries transducing regulatory signals from upstream transcriptional activator proteins to basal transcription machinery at the core promoter. Recruited to endogenous nuclear receptor target genes in response to the appropriate hormone. Also functions as a p53 coactivator. May thus play an important role in transcriptional regulation. May be involved in apoptosis signaling in the presence of the retinoid CD437. Apoptosis induction involves sequestration of 14-3-3 protein(s) and mediated altered expression of multiple cell cycle regulatory genes including MYC, CCNB1 and CDKN1A. Plays a role in cell cycle progression and/or cell proliferation. In association with CALCOCO1 enhances GATA1- and MED1-mediated transcriptional activation from the gamma-globin promoter during erythroid differentiation of K562 erythroleukemia cells. Can act as a both a coactivator and corepressor of AR-mediated transcription. Contributes to chromatin looping and AR transcription complex assembly by stabilizing AR-GATA2 association on chromatin and facilitating MED1 and RNA polymerase II recruitment to AR-binding sites. May play an important role in the growth and tumorigenesis of prostate cancer cells. The polypeptide is Cell division cycle and apoptosis regulator protein 1 (Ccar1) (Mus musculus (Mouse)).